A 542-amino-acid polypeptide reads, in one-letter code: Chaperonin GroEL (542 aa).

ATP is bound by residues 29–32, 86–90, Gly-413, 476–478, and Asp-492; these read TLGP, DGTTT, and NAA.

It belongs to the chaperonin (HSP60) family. In terms of assembly, forms a cylinder of 14 subunits composed of two heptameric rings stacked back-to-back. Interacts with the co-chaperonin GroES.

It is found in the cytoplasm. It carries out the reaction ATP + H2O + a folded polypeptide = ADP + phosphate + an unfolded polypeptide.. Together with its co-chaperonin GroES, plays an essential role in assisting protein folding. The GroEL-GroES system forms a nano-cage that allows encapsulation of the non-native substrate proteins and provides a physical environment optimized to promote and accelerate protein folding. In Lactococcus lactis subsp. cremoris (strain MG1363), this protein is Chaperonin GroEL.